The following is a 184-amino-acid chain: tRNA (cytidine(56)-2'-O)-methyltransferase (184 aa).

Residues Leu-87, 112–116, and 130–137 each bind S-adenosyl-L-methionine; these read GAEKV and VANQPHSE.

The protein belongs to the aTrm56 family. As to quaternary structure, homodimer.

The protein resides in the cytoplasm. The enzyme catalyses cytidine(56) in tRNA + S-adenosyl-L-methionine = 2'-O-methylcytidine(56) in tRNA + S-adenosyl-L-homocysteine + H(+). Functionally, specifically catalyzes the AdoMet-dependent 2'-O-ribose methylation of cytidine at position 56 in tRNAs. This Methanocorpusculum labreanum (strain ATCC 43576 / DSM 4855 / Z) protein is tRNA (cytidine(56)-2'-O)-methyltransferase.